Here is a 562-residue protein sequence, read N- to C-terminus: Isochorismate synthase 2, chloroplastic (562 aa).

A chloroplast-targeting transit peptide spans M1–E55.

It belongs to the isochorismate synthase family. Mg(2+) serves as cofactor.

The protein resides in the plastid. It is found in the chloroplast. It catalyses the reaction chorismate = isochorismate. It functions in the pathway siderophore biosynthesis; salicylate biosynthesis. Functionally, isochorismate synthase involved in the synthesis of salicylic acid (SA) required for both local and systemic acquired resistance (LAR and SAR) while SA synthesized through the phenylalanine ammonium lyase (PAL) pathway seems to potentiate plant cell death. Also involved in phylloquinone (vitamin K1) synthesis. Has no isochorismate pyruvate lyase (IPL) activity. This Arabidopsis thaliana (Mouse-ear cress) protein is Isochorismate synthase 2, chloroplastic (ICS2).